Here is a 72-residue protein sequence, read N- to C-terminus: Heat-stable enterotoxin C (72 aa).

Residues 1–19 form the signal peptide; it reads MKKIVFVLTLMLFSFGTLG. 3 disulfide bridges follow: Cys-60-Cys-65, Cys-61-Cys-69, and Cys-64-Cys-72.

It belongs to the heat-stable enterotoxin family.

It localises to the secreted. In terms of biological role, toxin which activates the particulate form of guanylate cyclase and increases cyclic GMP levels within the host intestinal epithelial cells. Highly toxic. In Yersinia enterocolitica, this protein is Heat-stable enterotoxin C (ystC).